We begin with the raw amino-acid sequence, 712 residues long: T-box transcription factor TBX2 (712 aa).

A DNA-binding region (T-box) is located at residues 109 to 287 (LEAKELWDQF…NNPFAKGFRD (179 aa)). A disordered region spans residues 313 to 450 (PERDGAESDA…EGKEQGLAPL (138 aa)). The span at 326–336 (DPPPAREPPTS) shows a compositional bias: pro residues. A phosphoserine mark is found at serine 336, serine 342, and serine 360. Composition is skewed to basic and acidic residues over residues 363–372 (EPERLSEERA), 391–409 (TEPE…KEPA), and 421–444 (SLEK…EGKE). Residues 518-601 (GGNGGGGGPG…ATSAAAAAAA (84 aa)) form a repression domain 1 (RD1) region. Phosphoserine is present on residues serine 622, serine 653, serine 657, and serine 676. The segment at 637–687 (LTTGLASEGSKAAGGNSREPSPLPELALRKVGAPSRGALSPSGSAKEAANE) is disordered.

In terms of assembly, binds DNA as a monomer. Interacts with PML (isoform PML-2, isoform PML-3 and isoform PML-4). In terms of tissue distribution, expressed primarily in adult in kidney, lung, and placenta. Weak expression in heart and ovary.

It is found in the nucleus. Functionally, transcription factor which acts as a transcriptional repressor. May also function as a transcriptional activator. Binds to the palindromic T site 5'-TTCACACCTAGGTGTGAA-3' DNA sequence, or a half-site, which are present in the regulatory region of several genes. Required for cardiac atrioventricular canal formation. May cooperate with NKX2.5 to negatively modulate expression of NPPA/ANF in the atrioventricular canal. May play a role as a positive regulator of TGFB2 expression, perhaps acting in concert with GATA4 in the developing outflow tract myocardium. Plays a role in limb pattern formation. Acts as a transcriptional repressor of ADAM10 gene expression, perhaps in concert with histone deacetylase HDAC1 as cofactor. Involved in branching morphogenesis in both developing lungs and adult mammary glands, via negative modulation of target genes; acting redundantly with TBX3. Required, together with TBX3, to maintain cell proliferation in the embryonic lung mesenchyme; perhaps acting downstream of SHH, BMP and TGFbeta signaling. Involved in modulating early inner ear development, acting independently of, and also redundantly with TBX3, in different subregions of the developing ear. Acts as a negative regulator of PML function in cellular senescence. Acts as a negative regulator of expression of CDKN1A/p21, IL33 and CCN4; repression of CDKN1A is enhanced in response to UV-induced stress, perhaps as a result of phosphorylation by p38 MAPK. Negatively modulates expression of CDKN2A/p14ARF and CDH1/E-cadherin. Plays a role in induction of the epithelial-mesenchymal transition (EMT). Plays a role in melanocyte proliferation, perhaps via regulation of cyclin CCND1. Involved in melanogenesis, acting via negative modulation of expression of DHICA oxidase/TYRP1 and P protein/OCA2. Involved in regulating retinal pigment epithelium (RPE) cell proliferation, perhaps via negatively modulating transcription of the transcription factor CEBPD. The chain is T-box transcription factor TBX2 (TBX2) from Homo sapiens (Human).